The sequence spans 613 residues: Dihydroxy-acid dehydratase (613 aa).

D81 is a Mg(2+) binding site. Residue C122 participates in [2Fe-2S] cluster binding. D123 and K124 together coordinate Mg(2+). K124 carries the N6-carboxylysine modification. A [2Fe-2S] cluster-binding site is contributed by C195. E491 is a binding site for Mg(2+). Catalysis depends on S517, which acts as the Proton acceptor.

This sequence belongs to the IlvD/Edd family. In terms of assembly, homodimer. It depends on [2Fe-2S] cluster as a cofactor. Mg(2+) serves as cofactor.

It carries out the reaction (2R)-2,3-dihydroxy-3-methylbutanoate = 3-methyl-2-oxobutanoate + H2O. The enzyme catalyses (2R,3R)-2,3-dihydroxy-3-methylpentanoate = (S)-3-methyl-2-oxopentanoate + H2O. It functions in the pathway amino-acid biosynthesis; L-isoleucine biosynthesis; L-isoleucine from 2-oxobutanoate: step 3/4. It participates in amino-acid biosynthesis; L-valine biosynthesis; L-valine from pyruvate: step 3/4. In terms of biological role, functions in the biosynthesis of branched-chain amino acids. Catalyzes the dehydration of (2R,3R)-2,3-dihydroxy-3-methylpentanoate (2,3-dihydroxy-3-methylvalerate) into 2-oxo-3-methylpentanoate (2-oxo-3-methylvalerate) and of (2R)-2,3-dihydroxy-3-methylbutanoate (2,3-dihydroxyisovalerate) into 2-oxo-3-methylbutanoate (2-oxoisovalerate), the penultimate precursor to L-isoleucine and L-valine, respectively. This is Dihydroxy-acid dehydratase from Vibrio atlanticus (strain LGP32) (Vibrio splendidus (strain Mel32)).